Reading from the N-terminus, the 122-residue chain is Large ribosomal subunit protein uL14 (122 aa).

Belongs to the universal ribosomal protein uL14 family. Part of the 50S ribosomal subunit. Forms a cluster with proteins L3 and L19. In the 70S ribosome, L14 and L19 interact and together make contacts with the 16S rRNA in bridges B5 and B8.

In terms of biological role, binds to 23S rRNA. Forms part of two intersubunit bridges in the 70S ribosome. The chain is Large ribosomal subunit protein uL14 from Streptococcus agalactiae serotype Ia (strain ATCC 27591 / A909 / CDC SS700).